The following is a 151-amino-acid chain: Large ribosomal subunit protein uL22 (151 aa).

The disordered stretch occupies residues 1-25; sequence MARINYSVKEDPETTSKAMGSELHI.

This sequence belongs to the universal ribosomal protein uL22 family. In terms of assembly, part of the 50S ribosomal subunit.

This protein binds specifically to 23S rRNA. It makes multiple contacts with different domains of the 23S rRNA in the assembled 50S subunit and ribosome. Its function is as follows. The globular domain of the protein is located near the polypeptide exit tunnel on the outside of the subunit, while an extended beta-hairpin is found that lines the wall of the exit tunnel in the center of the 70S ribosome. The protein is Large ribosomal subunit protein uL22 of Methanosarcina barkeri (strain Fusaro / DSM 804).